The chain runs to 526 residues: GMP synthase [glutamine-hydrolyzing] (526 aa).

The Glutamine amidotransferase type-1 domain occupies 14-208 (SILIVDFGSQ…VHDICGLAGD (195 aa)). Cys-91 (nucleophile) is an active-site residue. Active-site residues include His-182 and Glu-184. The GMPS ATP-PPase domain maps to 209 to 401 (WTMAEFRQTK…LGMPDVFVDR (193 aa)). 236–242 (SGGVDSS) contributes to the ATP binding site.

In terms of assembly, homodimer.

It carries out the reaction XMP + L-glutamine + ATP + H2O = GMP + L-glutamate + AMP + diphosphate + 2 H(+). It functions in the pathway purine metabolism; GMP biosynthesis; GMP from XMP (L-Gln route): step 1/1. Catalyzes the synthesis of GMP from XMP. This Zymomonas mobilis subsp. mobilis (strain ATCC 31821 / ZM4 / CP4) protein is GMP synthase [glutamine-hydrolyzing].